Reading from the N-terminus, the 344-residue chain is uncharacterized protein (344 aa).

Topologically, residues 1–98 (MIDFVKSRDT…NNDEIGIWNY (98 aa)) are cytoplasmic. Residues 99–119 (ISVAEMGGVLLFLSYWIWTCL) form a helical membrane-spanning segment. His-120 is a topological domain (lumenal). The helical transmembrane segment at 121–141 (FSKIIFPAQKVICLYIFLFAL) threads the bilayer. The Cytoplasmic segment spans residues 142–198 (NQTLQECIEEYVFSSECIKYRQFYSVYEIIDFLRTNFYRLFVIYCALGFGITRTVPK). The chain crosses the membrane as a helical span at residues 199–219 (YLMIKGISIVIALCSVYWISL). Residues 220-222 (YKD) lie on the Lumenal side of the membrane. Residues 223–243 (VYVVSEIFDMIQYEVSPAIWV) traverse the membrane as a helical segment. At 244 to 273 (YSICHLLKQCTSVTTYENASKARFFRRMLN) the chain is on the cytoplasmic side. Residues 274-294 (AFIFIFCASPMLHYLSNIIFG) traverse the membrane as a helical segment. The Lumenal segment spans residues 295–344 (NFDYRLSVIIGDLFTFMEKIAFPCYIMFPTHNEALAYNRNVAEEAQEKMI).

The protein belongs to the UPF0742 family.

Its subcellular location is the endoplasmic reticulum. The protein localises to the membrane. This is an uncharacterized protein from Schizosaccharomyces pombe (strain 972 / ATCC 24843) (Fission yeast).